A 466-amino-acid polypeptide reads, in one-letter code: 3-isopropylmalate dehydratase large subunit (466 aa).

Cys349, Cys410, and Cys413 together coordinate [4Fe-4S] cluster.

It belongs to the aconitase/IPM isomerase family. LeuC type 1 subfamily. In terms of assembly, heterodimer of LeuC and LeuD. [4Fe-4S] cluster is required as a cofactor.

It catalyses the reaction (2R,3S)-3-isopropylmalate = (2S)-2-isopropylmalate. It participates in amino-acid biosynthesis; L-leucine biosynthesis; L-leucine from 3-methyl-2-oxobutanoate: step 2/4. In terms of biological role, catalyzes the isomerization between 2-isopropylmalate and 3-isopropylmalate, via the formation of 2-isopropylmaleate. This Ruthia magnifica subsp. Calyptogena magnifica protein is 3-isopropylmalate dehydratase large subunit.